The chain runs to 208 residues: Probable adenylyl-sulfate kinase (208 aa).

38–45 (GLSGSGKS) lines the ATP pocket. The active-site Phosphoserine intermediate is the Ser-112.

The protein belongs to the APS kinase family.

The catalysed reaction is adenosine 5'-phosphosulfate + ATP = 3'-phosphoadenylyl sulfate + ADP + H(+). It functions in the pathway sulfur metabolism; hydrogen sulfide biosynthesis; sulfite from sulfate: step 2/3. Catalyzes the synthesis of activated sulfate. This is Probable adenylyl-sulfate kinase from Halalkalibacterium halodurans (strain ATCC BAA-125 / DSM 18197 / FERM 7344 / JCM 9153 / C-125) (Bacillus halodurans).